The chain runs to 173 residues: Mesencephalic astrocyte-derived neurotrophic factor homolog (173 aa).

Positions 1–22 are cleaved as a signal peptide; the sequence is MKTWHMVVVIGFLATLAQTSLA. 4 disulfide bridges follow: C28/C114, C31/C103, C61/C72, and C148/C151.

The protein belongs to the ARMET family.

Its subcellular location is the secreted. Required during the maturation of the embryonic nervous system for maintenance of neuronal and cuticular connectivity. Essential for maintenance of dopaminergic neurons and dopamine levels. The protein is Mesencephalic astrocyte-derived neurotrophic factor homolog of Drosophila sechellia (Fruit fly).